Here is a 63-residue protein sequence, read N- to C-terminus: UPF0434 protein Mmar10_2939 (63 aa).

The protein belongs to the UPF0434 family.

The chain is UPF0434 protein Mmar10_2939 from Maricaulis maris (strain MCS10) (Caulobacter maris).